A 339-amino-acid polypeptide reads, in one-letter code: Phenylalanine--tRNA ligase alpha subunit (339 aa).

Glu-253 is a binding site for Mg(2+).

This sequence belongs to the class-II aminoacyl-tRNA synthetase family. Phe-tRNA synthetase alpha subunit type 1 subfamily. In terms of assembly, tetramer of two alpha and two beta subunits. Requires Mg(2+) as cofactor.

Its subcellular location is the cytoplasm. The catalysed reaction is tRNA(Phe) + L-phenylalanine + ATP = L-phenylalanyl-tRNA(Phe) + AMP + diphosphate + H(+). The sequence is that of Phenylalanine--tRNA ligase alpha subunit from Ruthia magnifica subsp. Calyptogena magnifica.